A 156-amino-acid chain; its full sequence is Endoribonuclease YbeY (156 aa).

The Zn(2+) site is built by His117, His121, and His127.

The protein belongs to the endoribonuclease YbeY family. It depends on Zn(2+) as a cofactor.

Its subcellular location is the cytoplasm. Functionally, single strand-specific metallo-endoribonuclease involved in late-stage 70S ribosome quality control and in maturation of the 3' terminus of the 16S rRNA. The sequence is that of Endoribonuclease YbeY from Herminiimonas arsenicoxydans.